The primary structure comprises 289 residues: Glyceraldehyde-3-phosphate dehydrogenase (289 aa).

NAD(+) contacts are provided by D12 and R57. Residues 128-130, T159, 188-189, and R211 contribute to the D-glyceraldehyde 3-phosphate site; these read SCT and TG. Catalysis depends on C129, which acts as the Nucleophile.

This sequence belongs to the glyceraldehyde-3-phosphate dehydrogenase family. In terms of assembly, homotetramer.

It is found in the cytoplasm. The catalysed reaction is D-glyceraldehyde 3-phosphate + phosphate + NAD(+) = (2R)-3-phospho-glyceroyl phosphate + NADH + H(+). It functions in the pathway carbohydrate degradation; glycolysis; pyruvate from D-glyceraldehyde 3-phosphate: step 1/5. This is Glyceraldehyde-3-phosphate dehydrogenase (GPD) from Amanita muscaria (Fly agaric).